The sequence spans 180 residues: Interleukin-1-binding protein (180 aa).

The N-terminal stretch at 1-20 is a signal peptide; sequence MSILPVIFLPIFFYSPFVQT. Residues Asn-80, Asn-103, and Asn-113 are each glycosylated (N-linked (GlcNAc...) asparagine; by host).

It belongs to the interleukin-1 receptor family. As to quaternary structure, interacts with mouse Il1b.

It is found in the secreted. In terms of biological role, may reduce the host inflammatory response by interacting with inteleukin-1 beta (Il1b) and thus decreasing the association between IL1B and its cellular receptor. In Monkeypox virus, this protein is Interleukin-1-binding protein (OPG201).